The sequence spans 101 residues: Small ribosomal subunit protein bS18c (101 aa).

The segment covering 1–19 has biased composition (basic residues); the sequence is MNKSKRPFTKSKRSFRRRL. Positions 1 to 23 are disordered; sequence MNKSKRPFTKSKRSFRRRLPPIQ.

The protein belongs to the bacterial ribosomal protein bS18 family. As to quaternary structure, part of the 30S ribosomal subunit.

The protein resides in the plastid. Its subcellular location is the chloroplast. The polypeptide is Small ribosomal subunit protein bS18c (Lobularia maritima (Sweet alyssum)).